A 149-amino-acid chain; its full sequence is Nucleoside diphosphate kinase 1 (149 aa).

Positions 9, 57, 85, 91, 102, and 112 each coordinate ATP. His115 serves as the catalytic Pros-phosphohistidine intermediate.

The protein belongs to the NDK family. Requires Mg(2+) as cofactor. Autophosphorylated.

It catalyses the reaction a 2'-deoxyribonucleoside 5'-diphosphate + ATP = a 2'-deoxyribonucleoside 5'-triphosphate + ADP. The catalysed reaction is a ribonucleoside 5'-diphosphate + ATP = a ribonucleoside 5'-triphosphate + ADP. In terms of biological role, major role in the synthesis of nucleoside triphosphates other than ATP. The ATP gamma phosphate is transferred to the NDP beta phosphate via a ping-pong mechanism, using a phosphorylated active-site intermediate. Also exhibits a kinase-like activity towards histone H1. The protein is Nucleoside diphosphate kinase 1 (NDPK1) of Saccharum officinarum (Sugarcane).